The chain runs to 1441 residues: Gag-Pol polyprotein (1441 aa).

The N-myristoyl glycine; by host moiety is linked to residue Gly-2. Positions 16 to 22 (FEKIRLK) match the Nuclear export signal motif. The Nuclear localization signal signature appears at 26–32 (KKCYRLK). Residues 204–226 (THPQQQPAQPGGGLRTPSGSDIA) form a disordered region. CCHC-type zinc fingers lie at residues 386–403 (PICFNCNKEGHVARFFKA) and 407–424 (KGCWNCGAMDHQKAQCPK). The segment covering 444–466 (TGELSGTRGDSNSSTIRGETSAE) has biased composition (polar residues). The interval 444–494 (TGELSGTRGDSNSSTIRGETSAENSEHLSEIRERAQAEDEGGEERGGFSFP) is disordered. Basic and acidic residues predominate over residues 467 to 480 (NSEHLSEIRERAQA). In terms of domain architecture, Peptidase A2 spans 513–584 (IRALLDTGAD…TPIDIIGRNI (72 aa)). Residue Asp-518 is the For protease activity; shared with dimeric partner of the active site. Positions 640-830 (EGKISRVDPG…PPFHWMGYEL (191 aa)) constitute a Reverse transcriptase domain. Mg(2+) is bound by residues Asp-706, Asp-781, and Asp-782. The segment at 823–831 (FHWMGYELH) is RT 'primer grip'. Positions 994 to 1010 (WEDWWHEYWQCTWIPEV) match the Tryptophan repeat motif motif. The RNase H type-1 domain occupies 1030–1153 (LEGVETYYVD…IDKLVSSGIR (124 aa)). 4 residues coordinate Mg(2+): Asp-1039, Glu-1074, Asp-1094, and Asp-1145. An Integrase-type zinc finger spans residues 1159–1200 (QNIEPAQEEHEKYHSNEAQLREKFHLPALVAKQIVQSCSKCC). Zn(2+) contacts are provided by His-1168, His-1172, Cys-1196, and Cys-1199. The 151-residue stretch at 1210–1360 (TDASLGVWQI…TAGERIVNMI (151 aa)) folds into the Integrase catalytic domain. Residues Asp-1220 and Asp-1272 each coordinate Mg(2+). Residues 1379 to 1426 (FKVYFREGRDQLWKGPGILLWKGEGAVVLKYQEEIKIVPRRKCKIIKD) constitute a DNA-binding region (integrase-type).

As to quaternary structure, homotrimer. Interacts with gp41 (via C-terminus). Homodimer. The active site consists of two apposed aspartic acid residues. In terms of assembly, heterodimer of p66 RT and p51 RT (RT p66/p51). Heterodimerization of RT is essential for DNA polymerase activity. Despite the sequence identities, p66 RT and p51 RT have distinct folding. As to quaternary structure, homotetramer; may further associate as a homohexadecamer. Mg(2+) is required as a cofactor. Post-translationally, specific enzymatic cleavages by the viral protease yield mature proteins. The protease is released by autocatalytic cleavage. The polyprotein is cleaved during and after budding, this process is termed maturation. Proteolytic cleavage of p66 RT removes the RNase H domain to yield the p51 RT subunit. Capsid protein p24 is phosphorylated.

The protein resides in the virion. Its subcellular location is the host nucleus. The protein localises to the host cytoplasm. It localises to the host cell membrane. The enzyme catalyses Specific for a P1 residue that is hydrophobic, and P1' variable, but often Pro.. It catalyses the reaction Endohydrolysis of RNA in RNA/DNA hybrids. Three different cleavage modes: 1. sequence-specific internal cleavage of RNA. Human immunodeficiency virus type 1 and Moloney murine leukemia virus enzymes prefer to cleave the RNA strand one nucleotide away from the RNA-DNA junction. 2. RNA 5'-end directed cleavage 13-19 nucleotides from the RNA end. 3. DNA 3'-end directed cleavage 15-20 nucleotides away from the primer terminus.. The catalysed reaction is 3'-end directed exonucleolytic cleavage of viral RNA-DNA hybrid.. It carries out the reaction DNA(n) + a 2'-deoxyribonucleoside 5'-triphosphate = DNA(n+1) + diphosphate. Its activity is regulated as follows. The viral protease is inhibited by many synthetic protease inhibitors (PIs), such as amprenavir, atazanavir, indinavir, loprinavir, nelfinavir, ritonavir and saquinavir. RT can be inhibited either by nucleoside RT inhibitors (NRTIs) or by non nucleoside RT inhibitors (NNRTIs). NRTIs act as chain terminators, whereas NNRTIs inhibit DNA polymerization by binding a small hydrophobic pocket near the RT active site and inducing an allosteric change in this region. Classical NRTIs are abacavir, adefovir (PMEA), didanosine (ddI), lamivudine (3TC), stavudine (d4T), tenofovir (PMPA), zalcitabine (ddC), and zidovudine (AZT). Classical NNRTIs are atevirdine (BHAP U-87201E), delavirdine, efavirenz (DMP-266), emivirine (I-EBU), and nevirapine (BI-RG-587). The tritherapies used as a basic effective treatment of AIDS associate two NRTIs and one NNRTI. Use of protease inhibitors in tritherapy regimens permit more ambitious therapeutic strategies. Gag-Pol polyprotein and Gag polyprotein may regulate their own translation, by the binding genomic RNA in the 5'-UTR. At low concentration, Gag-Pol and Gag would promote translation, whereas at high concentration, the polyproteins encapsidate genomic RNA and then shut off translation. Functionally, matrix protein p17 has two main functions: in infected cell, it targets Gag and Gag-pol polyproteins to the plasma membrane via a multipartite membrane-binding signal, that includes its myristointegration complex. The myristoylation signal and the NLS exert conflicting influences its subcellular localization. The key regulation of these motifs might be phosphorylation of a portion of MA molecules on the C-terminal tyrosine at the time of virus maturation, by virion-associated cellular tyrosine kinase. Implicated in the release from host cell mediated by Vpu. Its function is as follows. Capsid protein p24 forms the conical core that encapsulates the genomic RNA-nucleocapsid complex in the virion. The core is constituted by capsid protein hexamer subunits. The core is disassembled soon after virion entry. Interaction with host PPIA/CYPA protects the virus from restriction by host TRIM5-alpha and from an unknown antiviral activity in host cells. This capsid restriction by TRIM5 is one of the factors which restricts SIV to the simian species. In terms of biological role, nucleocapsid protein p7 encapsulates and protects viral dimeric unspliced (genomic) RNA. Binds these RNAs through its zinc fingers. Facilitates rearangement of nucleic acid secondary structure during retrotranscription of genomic RNA. This capability is referred to as nucleic acid chaperone activity. The aspartyl protease mediates proteolytic cleavages of Gag and Gag-Pol polyproteins during or shortly after the release of the virion from the plasma membrane. Cleavages take place as an ordered, step-wise cascade to yield mature proteins. This process is called maturation. Displays maximal activity during the budding process just prior to particle release from the cell. Also cleaves Nef and Vif, probably concomitantly with viral structural proteins on maturation of virus particles. Hydrolyzes host EIF4GI and PABP1 in order to shut off the capped cellular mRNA translation. The resulting inhibition of cellular protein synthesis serves to ensure maximal viral gene expression and to evade host immune response. Functionally, reverse transcriptase/ribonuclease H (RT) is a multifunctional enzyme that converts the viral dimeric RNA genome into dsDNA in the cytoplasm, shortly after virus entry into the cell. This enzyme displays a DNA polymerase activity that can copy either DNA or RNA templates, and a ribonuclease H (RNase H) activity that cleaves the RNA strand of RNA-DNA heteroduplexes in a partially processive 3' to 5' endonucleasic mode. Conversion of viral genomic RNA into dsDNA requires many steps. A tRNA binds to the primer-binding site (PBS) situated at the 5'-end of the viral RNA. RT uses the 3' end of the tRNA primer to perform a short round of RNA-dependent minus-strand DNA synthesis. The reading proceeds through the U5 region and ends after the repeated (R) region which is present at both ends of viral RNA. The portion of the RNA-DNA heteroduplex is digested by the RNase H, resulting in a ssDNA product attached to the tRNA primer. This ssDNA/tRNA hybridizes with the identical R region situated at the 3' end of viral RNA. This template exchange, known as minus-strand DNA strong stop transfer, can be either intra- or intermolecular. RT uses the 3' end of this newly synthesized short ssDNA to perform the RNA-dependent minus-strand DNA synthesis of the whole template. RNase H digests the RNA template except for two polypurine tracts (PPTs) situated at the 5'-end and near the center of the genome. It is not clear if both polymerase and RNase H activities are simultaneous. RNase H can probably proceed both in a polymerase-dependent (RNA cut into small fragments by the same RT performing DNA synthesis) and a polymerase-independent mode (cleavage of remaining RNA fragments by free RTs). Secondly, RT performs DNA-directed plus-strand DNA synthesis using the PPTs that have not been removed by RNase H as primers. PPTs and tRNA primers are then removed by RNase H. The 3' and 5' ssDNA PBS regions hybridize to form a circular dsDNA intermediate. Strand displacement synthesis by RT to the PBS and PPT ends produces a blunt ended, linear dsDNA copy of the viral genome that includes long terminal repeats (LTRs) at both ends. Its function is as follows. Integrase catalyzes viral DNA integration into the host chromosome, by performing a series of DNA cutting and joining reactions. This enzyme activity takes place after virion entry into a cell and reverse transcription of the RNA genome in dsDNA. The first step in the integration process is 3' processing. This step requires a complex comprising the viral genome, matrix protein, Vpr and integrase. This complex is called the pre-integration complex (PIC). The integrase protein removes 2 nucleotides from each 3' end of the viral DNA, leaving recessed CA OH's at the 3' ends. In the second step, the PIC enters cell nucleus. This process is mediated through integrase and Vpr proteins, and allows the virus to infect a non dividing cell. This ability to enter the nucleus is specific of lentiviruses, other retroviruses cannot and rely on cell division to access cell chromosomes. In the third step, termed strand transfer, the integrase protein joins the previously processed 3' ends to the 5' ends of strands of target cellular DNA at the site of integration. The 5'-ends are produced by integrase-catalyzed staggered cuts, 5 bp apart. A Y-shaped, gapped, recombination intermediate results, with the 5'-ends of the viral DNA strands and the 3' ends of target DNA strands remaining unjoined, flanking a gap of 5 bp. The last step is viral DNA integration into host chromosome. This involves host DNA repair synthesis in which the 5 bp gaps between the unjoined strands are filled in and then ligated. Since this process occurs at both cuts flanking the SIV genome, a 5 bp duplication of host DNA is produced at the ends of SIV integration. Alternatively, Integrase may catalyze the excision of viral DNA just after strand transfer, this is termed disintegration. The polypeptide is Gag-Pol polyprotein (gag-pol) (Cercopithecidae (Old World monkeys)).